Here is a 291-residue protein sequence, read N- to C-terminus: N-acetylmannosamine kinase (291 aa).

ATP contacts are provided by residues 5–12 (AIDIGGTK) and 132–139 (GVGGGVVS). Positions 156, 166, 168, and 173 each coordinate Zn(2+).

Belongs to the ROK (NagC/XylR) family. NanK subfamily. As to quaternary structure, homodimer.

It catalyses the reaction an N-acyl-D-mannosamine + ATP = an N-acyl-D-mannosamine 6-phosphate + ADP + H(+). Its pathway is amino-sugar metabolism; N-acetylneuraminate degradation; D-fructose 6-phosphate from N-acetylneuraminate: step 2/5. Functionally, catalyzes the phosphorylation of N-acetylmannosamine (ManNAc) to ManNAc-6-P. The polypeptide is N-acetylmannosamine kinase (Escherichia coli O6:K15:H31 (strain 536 / UPEC)).